A 92-amino-acid polypeptide reads, in one-letter code: Small ribosomal subunit protein uS19 (92 aa).

Belongs to the universal ribosomal protein uS19 family.

Its function is as follows. Protein S19 forms a complex with S13 that binds strongly to the 16S ribosomal RNA. This chain is Small ribosomal subunit protein uS19, found in Methylobacterium sp. (strain 4-46).